The following is a 524-amino-acid chain: 2-isopropylmalate synthase (524 aa).

The Pyruvate carboxyltransferase domain occupies 12–274 (VIIFDTTLRD…WNRIESKMLT (263 aa)). 4 residues coordinate Mn(2+): Asp21, His209, His211, and Asn245. The segment at 398 to 524 (RLKSLTVIAG…QDAPAVAVAG (127 aa)) is regulatory domain.

This sequence belongs to the alpha-IPM synthase/homocitrate synthase family. LeuA type 1 subfamily. As to quaternary structure, homodimer. Mn(2+) serves as cofactor.

The protein resides in the cytoplasm. The enzyme catalyses 3-methyl-2-oxobutanoate + acetyl-CoA + H2O = (2S)-2-isopropylmalate + CoA + H(+). It participates in amino-acid biosynthesis; L-leucine biosynthesis; L-leucine from 3-methyl-2-oxobutanoate: step 1/4. Its function is as follows. Catalyzes the condensation of the acetyl group of acetyl-CoA with 3-methyl-2-oxobutanoate (2-ketoisovalerate) to form 3-carboxy-3-hydroxy-4-methylpentanoate (2-isopropylmalate). The polypeptide is 2-isopropylmalate synthase (Rhodopseudomonas palustris (strain BisB5)).